Here is a 255-residue protein sequence, read N- to C-terminus: Post-GPI attachment to proteins factor 2 (255 aa).

Helical transmembrane passes span 25-45, 80-100, 111-131, 143-163, 185-205, and 209-229; these read LAAL…SLLF, LAIF…LEYY, LGIL…CLSF, NAFV…YLLN, LFLV…RHNA, and AGVY…NMGF.

It belongs to the PGAP2 family.

The protein localises to the golgi apparatus membrane. The protein resides in the endoplasmic reticulum membrane. Functionally, involved in the lipid remodeling steps of GPI-anchor maturation. Required for stable expression of GPI-anchored proteins at the cell surface. This Drosophila pseudoobscura pseudoobscura (Fruit fly) protein is Post-GPI attachment to proteins factor 2.